The sequence spans 783 residues: Endonuclease MutS2 (783 aa).

328–335 (GPNTGGKT) lines the ATP pocket. The region spanning 708-783 (LDLRGKRYEE…GSGCTIATLG (76 aa)) is the Smr domain.

The protein belongs to the DNA mismatch repair MutS family. MutS2 subfamily. As to quaternary structure, homodimer. Binds to stalled ribosomes, contacting rRNA.

Functionally, endonuclease that is involved in the suppression of homologous recombination and thus may have a key role in the control of bacterial genetic diversity. Acts as a ribosome collision sensor, splitting the ribosome into its 2 subunits. Detects stalled/collided 70S ribosomes which it binds and splits by an ATP-hydrolysis driven conformational change. Acts upstream of the ribosome quality control system (RQC), a ribosome-associated complex that mediates the extraction of incompletely synthesized nascent chains from stalled ribosomes and their subsequent degradation. Probably generates substrates for RQC. This chain is Endonuclease MutS2, found in Streptococcus thermophilus (strain CNRZ 1066).